A 545-amino-acid polypeptide reads, in one-letter code: CTP synthase (545 aa).

The interval Met-1–Leu-265 is amidoligase domain. Ser-13 serves as a coordination point for CTP. UTP is bound at residue Ser-13. ATP contacts are provided by residues Ser-14–Ile-19 and Asp-71. The Mg(2+) site is built by Asp-71 and Glu-139. CTP is bound by residues Asp-146–Glu-148, Lys-186–Gln-191, and Lys-222. UTP-binding positions include Lys-186 to Gln-191 and Lys-222. Residues Lys-290 to Ser-544 form the Glutamine amidotransferase type-1 domain. Gly-355 serves as a coordination point for L-glutamine. Cys-382 functions as the Nucleophile; for glutamine hydrolysis in the catalytic mechanism. L-glutamine contacts are provided by residues Leu-383–Gln-386, Glu-406, and Arg-473. Residues His-517 and Glu-519 contribute to the active site.

This sequence belongs to the CTP synthase family. In terms of assembly, homotetramer.

The enzyme catalyses UTP + L-glutamine + ATP + H2O = CTP + L-glutamate + ADP + phosphate + 2 H(+). It catalyses the reaction L-glutamine + H2O = L-glutamate + NH4(+). It carries out the reaction UTP + NH4(+) + ATP = CTP + ADP + phosphate + 2 H(+). Its pathway is pyrimidine metabolism; CTP biosynthesis via de novo pathway; CTP from UDP: step 2/2. Allosterically activated by GTP, when glutamine is the substrate; GTP has no effect on the reaction when ammonia is the substrate. The allosteric effector GTP functions by stabilizing the protein conformation that binds the tetrahedral intermediate(s) formed during glutamine hydrolysis. Inhibited by the product CTP, via allosteric rather than competitive inhibition. Catalyzes the ATP-dependent amination of UTP to CTP with either L-glutamine or ammonia as the source of nitrogen. Regulates intracellular CTP levels through interactions with the four ribonucleotide triphosphates. The polypeptide is CTP synthase (Nautilia profundicola (strain ATCC BAA-1463 / DSM 18972 / AmH)).